The primary structure comprises 30 residues: Thaumatin-like protein (30 aa).

The protein belongs to the thaumatin family.

It is found in the secreted. Its function is as follows. Has antifungal activity against C.comatus, F.oxysporum and P.ostreatus. The sequence is that of Thaumatin-like protein from Phaseolus vulgaris (Kidney bean).